Consider the following 630-residue polypeptide: MKFNKLNLSHCISFYISEVSEVFFESINQHPSRDFVNNILQKIKTTLSEEELEKLNSIEEVTKDEKIVIMLNHVLKKIVSKTGSSKCDLFNVIKQDRFNSPVYIQSINAFENNLINNEFAERRYDYLIEVNKNSYLKKFVNSIRISFFLDLRAQILSGSFTLNLVNKSIEKQKKTEIFKDIFVNALVKHFICNQLYPISLNSFIFDSENPSNKLALKERIKLLKTNWNSLFFDKFYNCLNNKNKQQLQETSDEMFYAVINTYLIMLISVEELRVYFTSKEPALILKVLDKKNTLREDPDQNPETDLYELIQFIEQNYLKKDKKTSWNKKKVQDLEQLLEEINKINLETKNESLAYPDEITELEIDNDNFVSTKQVFRNQLELQLLHGIVINPEKYGIGMWSSYFADWSEYKNLIEQMLNPKSGNDFYQFEKDIDESICQINKKYLTFISSDSNTFLIVKNDDVKVISNYVWAQLFFETRRWIINDIEFDLYEKGFDKSHFSRNIALLESLSFSWLDPFYGLTSIKEIMQKIDSKSNLKTSIEEMVNRFKHEQRINKKDNERVLMIFAYIAAFVVGFINFFSMVFTILTVSDLNAGLTVPNIIVISIASVLAFILIVIAVLFRFKWKHIKH.

The next 4 membrane-spanning stretches (helical) occupy residues 254 to 274, 504 to 524, 564 to 584, and 601 to 621; these read MFYAVINTYLIMLISVEELRV, IALLESLSFSWLDPFYGLTSI, MIFAYIAAFVVGFINFFSMVF, and IIVISIASVLAFILIVIAVLF.

The protein resides in the cell membrane. This is an uncharacterized protein from Mycoplasma genitalium (strain ATCC 33530 / DSM 19775 / NCTC 10195 / G37) (Mycoplasmoides genitalium).